The sequence spans 426 residues: uncharacterized protein (426 aa).

Positions 1-23 are cleaved as a signal peptide; it reads MKKFILFLIILLFSIYFLNVSSA.

This is an uncharacterized protein from Methanocaldococcus jannaschii (strain ATCC 43067 / DSM 2661 / JAL-1 / JCM 10045 / NBRC 100440) (Methanococcus jannaschii).